Consider the following 628-residue polypeptide: Choline transporter-like protein 2 (628 aa).

At 1 to 31 (MSSEDLQDHHEIGNEVIKKKGVYTKKKCQDC) the chain is on the cytoplasmic side. Residues 32–52 (FFLILFLLFWAGMIVVAAFGV) form a helical membrane-spanning segment. At 53 to 204 (KNGKPDRIVK…EILTDLTNSW (152 aa)) the chain is on the extracellular side. Asn-82, Asn-118, Asn-146, and Asn-168 each carry an N-linked (GlcNAc...) asparagine glycan. The helical transmembrane segment at 205–225 (RYLIYGALIAMGLGLTWIFLL) threads the bilayer. Position 226 (Arg-226) is a topological domain, cytoplasmic. Residues 227–247 (FFAGFITWLTVFAAYACLGLL) traverse the membrane as a helical segment. The Extracellular segment spans residues 248 to 282 (TAQVYFQWQDSKDAYENTIPSQRLVMQEKNILALK). The chain crosses the membrane as a helical span at residues 283 to 303 (VIFIILCVVCGIFALILLALF). At 304-319 (SRIRIAIRIIKECSRA) the chain is on the cytoplasmic side. The chain crosses the membrane as a helical span at residues 320–340 (IGIMPSIFFFPIFIFLLLCGF). Residues 341–381 (TVYWVYIGVYLATAGSPTYDDQYRFTGYEADSKLQKIQIYH) lie on the Extracellular side of the membrane. The helical transmembrane segment at 382–402 (FFGYLWTFAFILALNQTTIAG) threads the bilayer. Over 403–432 (AISSWYWVQDKKDTPFFPVWSSFFRVIRYH) the chain is Cytoplasmic. The helical transmembrane segment at 433–453 (LGSIALGSLILAIVQFIRWVL) threads the bilayer. At 454 to 530 (RFLEKKFKGK…RVAAVNLVSS (77 aa)) the chain is on the extracellular side. The helical transmembrane segment at 531-551 (FLMFLGRVFITAATVGISLYL) threads the bilayer. Residues 552–559 (LKEHENLS) lie on the Cytoplasmic side of the membrane. Residues 560-580 (FYIIPVILIGFIAFAISTGFM) traverse the membrane as a helical segment. Residues 581–628 (SVYDMSIDTMLLCFCEDCERNDGSPERPYYMSKSLRKFVDGKGRSKCC) are Extracellular-facing.

It belongs to the CTL (choline transporter-like) family.

Its subcellular location is the cell membrane. The protein localises to the mitochondrion outer membrane. It catalyses the reaction choline(out) + n H(+)(in) = choline(in) + n H(+)(out). The enzyme catalyses ethanolamine(out) + n H(+)(in) = ethanolamine(in) + n H(+)(out). Choline/H+ antiporter, mainly in mitochodria. Also acts as a low-affinity ethanolamine/H+ antiporter, regulating the supply of extracellular ethanolamine (Etn) for the CDP-Etn pathway, redistribute intracellular Etn and balance the CDP-Cho and CDP-Etn arms of the Kennedy pathway. The protein is Choline transporter-like protein 2 (slc44a2) of Dictyostelium discoideum (Social amoeba).